The chain runs to 72 residues: Metallothionein-like protein type 2 (72 aa).

The protein belongs to the metallothionein superfamily. Type 15 family.

Functionally, metallothioneins have a high content of cysteine residues that bind various heavy metals. In Solanum lycopersicum (Tomato), this protein is Metallothionein-like protein type 2.